A 108-amino-acid polypeptide reads, in one-letter code: uncharacterized protein (108 aa).

Cystine bridges form between Cys44/Cys82, Cys60/Cys78, and Cys63/Cys91.

This sequence belongs to the arthropod CHH/MIH/GIH/VIH hormone family.

This is an uncharacterized protein from Caenorhabditis elegans.